A 323-amino-acid chain; its full sequence is Ethanolamine-phosphate cytidylyltransferase (323 aa).

Belongs to the cytidylyltransferase family.

Its subcellular location is the cytoplasm. It is found in the nucleus. It carries out the reaction phosphoethanolamine + CTP + H(+) = CDP-ethanolamine + diphosphate. The protein operates within phospholipid metabolism; phosphatidylethanolamine biosynthesis; phosphatidylethanolamine from ethanolamine: step 2/3. Its function is as follows. Ethanolamine-phosphate cytidylyltransferase which catalyzes the second step of phosphatidylethanolamine biosynthesis. Involved in the maintenance of plasma membrane and required for proper sporulation. This Saccharomyces cerevisiae (strain ATCC 204508 / S288c) (Baker's yeast) protein is Ethanolamine-phosphate cytidylyltransferase.